The following is a 516-amino-acid chain: GMP synthase [glutamine-hydrolyzing] (516 aa).

The Glutamine amidotransferase type-1 domain occupies 5–199; the sequence is PIVILDFGSQ…ARKICGITSK (195 aa). The active-site Nucleophile is the C82. Residues H173 and E175 contribute to the active site. Residues 200–391 form the GMPS ATP-PPase domain; sequence WDMGHFAKEQ…LGLPREMVYR (192 aa). ATP is bound at residue 227 to 233; sequence SGGVDSS.

As to quaternary structure, homodimer.

It catalyses the reaction XMP + L-glutamine + ATP + H2O = GMP + L-glutamate + AMP + diphosphate + 2 H(+). The protein operates within purine metabolism; GMP biosynthesis; GMP from XMP (L-Gln route): step 1/1. Functionally, catalyzes the synthesis of GMP from XMP. In Nitratiruptor sp. (strain SB155-2), this protein is GMP synthase [glutamine-hydrolyzing].